The chain runs to 76 residues: Large ribosomal subunit protein eL20 (76 aa).

The protein belongs to the eukaryotic ribosomal protein eL20 family. Part of the 50S ribosomal subunit. Binds 23S rRNA.

This is Large ribosomal subunit protein eL20 from Methanococcus maripaludis (strain C5 / ATCC BAA-1333).